The chain runs to 356 residues: UDP-N-acetylglucosamine--N-acetylmuramyl-(pentapeptide) pyrophosphoryl-undecaprenol N-acetylglucosamine transferase (356 aa).

Residues 15 to 17 (TGG), Asn127, Arg163, Ser191, Ile244, 263 to 268 (ALTVSE), and Gln288 contribute to the UDP-N-acetyl-alpha-D-glucosamine site.

Belongs to the glycosyltransferase 28 family. MurG subfamily.

It localises to the cell inner membrane. It catalyses the reaction di-trans,octa-cis-undecaprenyl diphospho-N-acetyl-alpha-D-muramoyl-L-alanyl-D-glutamyl-meso-2,6-diaminopimeloyl-D-alanyl-D-alanine + UDP-N-acetyl-alpha-D-glucosamine = di-trans,octa-cis-undecaprenyl diphospho-[N-acetyl-alpha-D-glucosaminyl-(1-&gt;4)]-N-acetyl-alpha-D-muramoyl-L-alanyl-D-glutamyl-meso-2,6-diaminopimeloyl-D-alanyl-D-alanine + UDP + H(+). It participates in cell wall biogenesis; peptidoglycan biosynthesis. In terms of biological role, cell wall formation. Catalyzes the transfer of a GlcNAc subunit on undecaprenyl-pyrophosphoryl-MurNAc-pentapeptide (lipid intermediate I) to form undecaprenyl-pyrophosphoryl-MurNAc-(pentapeptide)GlcNAc (lipid intermediate II). The sequence is that of UDP-N-acetylglucosamine--N-acetylmuramyl-(pentapeptide) pyrophosphoryl-undecaprenol N-acetylglucosamine transferase from Yersinia pestis (strain Pestoides F).